The primary structure comprises 133 residues: Ribonuclease P protein component (133 aa).

This sequence belongs to the RnpA family. In terms of assembly, consists of a catalytic RNA component (M1 or rnpB) and a protein subunit.

The catalysed reaction is Endonucleolytic cleavage of RNA, removing 5'-extranucleotides from tRNA precursor.. Functionally, RNaseP catalyzes the removal of the 5'-leader sequence from pre-tRNA to produce the mature 5'-terminus. It can also cleave other RNA substrates such as 4.5S RNA. The protein component plays an auxiliary but essential role in vivo by binding to the 5'-leader sequence and broadening the substrate specificity of the ribozyme. In Bartonella quintana (strain Toulouse) (Rochalimaea quintana), this protein is Ribonuclease P protein component.